The chain runs to 453 residues: Ribosomal protein uS12 methylthiotransferase RimO (453 aa).

The 111-residue stretch at 6–116 (PTVGIVSLGC…VLTAVHEAIA (111 aa)) folds into the MTTase N-terminal domain. [4Fe-4S] cluster is bound by residues Cys15, Cys51, Cys80, Cys148, Cys152, and Cys155. Residues 134–371 (LTPKHFAYLK…MQLQQQISAN (238 aa)) form the Radical SAM core domain. Residues 374-440 (QAKIGKTIQV…EYDLWATPVG (67 aa)) form the TRAM domain.

This sequence belongs to the methylthiotransferase family. RimO subfamily. [4Fe-4S] cluster serves as cofactor.

It localises to the cytoplasm. It carries out the reaction L-aspartate(89)-[ribosomal protein uS12]-hydrogen + (sulfur carrier)-SH + AH2 + 2 S-adenosyl-L-methionine = 3-methylsulfanyl-L-aspartate(89)-[ribosomal protein uS12]-hydrogen + (sulfur carrier)-H + 5'-deoxyadenosine + L-methionine + A + S-adenosyl-L-homocysteine + 2 H(+). In terms of biological role, catalyzes the methylthiolation of an aspartic acid residue of ribosomal protein uS12. The protein is Ribosomal protein uS12 methylthiotransferase RimO of Hydrogenovibrio crunogenus (strain DSM 25203 / XCL-2) (Thiomicrospira crunogena).